The primary structure comprises 743 residues: TSL-kinase interacting protein 1 (743 aa).

One can recognise an SANT domain in the interval 53 to 104; the sequence is RQWAAWTHQEEESFFTALRQVGKNFEKITSRVQSKNKDQVRHYYYRLVRRMN. 2 disordered regions span residues 486–523 and 626–679; these read SGVH…PGEW and SPKG…TPCG. The segment covering 488-499 has biased composition (basic and acidic residues); it reads VHDRPARSRDDY.

Interacts only with active kinase forms of TOUSLED. Interacts with SNL1. In terms of processing, phosphorylated in vitro by TOUSLED. As to expression, expressed in flowers, roots and leaves.

It is found in the nucleus. The chain is TSL-kinase interacting protein 1 (TKI1) from Arabidopsis thaliana (Mouse-ear cress).